An 86-amino-acid chain; its full sequence is Neurotoxin LmNaTx1 (86 aa).

The signal sequence occupies residues 1-18; it reads MKILIIFVIAITVVGVQS. The LCN-type CS-alpha/beta domain occupies 19 to 85; sequence KDGYPIYSTG…VWTYAENTCG (67 aa). 4 cysteine pairs are disulfide-bonded: C33–C84, C37–C58, C44–C65, and C48–C67. C84 is subject to Cysteine amide.

Belongs to the long (4 C-C) scorpion toxin superfamily. Sodium channel inhibitor family. Beta subfamily. Expressed by the venom gland.

The protein localises to the secreted. Functionally, binds voltage-independently at site-4 of sodium channels (Nav) and shift the voltage of activation toward more negative potentials thereby affecting sodium channel activation and promoting spontaneous and repetitive firing. This chain is Neurotoxin LmNaTx1, found in Lychas mucronatus (Chinese swimming scorpion).